Reading from the N-terminus, the 425-residue chain is MNYARFITAASAARNPSPIRTMTDILSRGPKSMISLAGGLPNPNMFPFKTAVITVENGKTIQFGEEMMKRALQYSPSAGIPELLSWLKQLQIKLHNPPTIHYPPSQGQMDLCVTSGSQQGLCKVFEMIINPGDNVLLDEPAYSGTLQSLHPLGCNIINVASDESGIVPDSLRDILSRWKPEDAKNPQKNTPKFLYTVPNGNNPTGNSLTSERKKEIYELARKYDFLIIEDDPYYFLQFNKFRVPTFLSMDVDGRVIRADSFSKIISSGLRIGFLTGPKPLIERVILHIQVSTLHPSTFNQLMISQLLHEWGEEGFMAHVDRVIDFYSNQKDAILAAADKWLTGLAEWHVPAAGMFLWIKVKGINDVKELIEEKAVKMGVLMLPGNAFYVDSSAPSPYLRASFSSASPEQMDVAFQVLAQLIKESL.

Residues 1–29 (MNYARFITAASAARNPSPIRTMTDILSRG) constitute a mitochondrion transit peptide. Arg-20 lines the substrate pocket. Lys-69 is modified (N6-acetyllysine). Positions 74 and 142 each coordinate substrate. Residue Lys-179 is modified to N6-acetyllysine. The segment at 181–208 (EDAKNPQKNTPKFLYTVPNGNNPTGNSL) is disordered. The span at 198–208 (PNGNNPTGNSL) shows a compositional bias: polar residues. Asn-202 lines the substrate pocket. An N6-(pyridoxal phosphate)lysine; alternate modification is found at Lys-263. Residues Lys-263, Lys-339, and Lys-367 each carry the N6-acetyllysine; alternate modification. Residues Lys-263, Lys-339, and Lys-367 each carry the N6-succinyllysine; alternate modification. Arg-399 serves as a coordination point for substrate. Position 422 is an N6-acetyllysine (Lys-422).

This sequence belongs to the class-I pyridoxal-phosphate-dependent aminotransferase family. Homodimer. The cofactor is pyridoxal 5'-phosphate. In terms of tissue distribution, higher expression in the liver. Also found in heart, brain, kidney, pancreas, prostate, testis and ovary.

The protein resides in the mitochondrion. The enzyme catalyses glycine + 2-oxoglutarate = glyoxylate + L-glutamate. It catalyses the reaction L-kynurenine + 2-oxoglutarate = kynurenate + L-glutamate + H2O. The catalysed reaction is L-kynurenine + glyoxylate = kynurenate + glycine + H2O. It carries out the reaction 3-hydroxy-L-kynurenine + glyoxylate = xanthurenate + glycine + H2O. The enzyme catalyses 2-oxohexanoate + L-kynurenine = L-2-aminohexanoate + kynurenate + H2O. It catalyses the reaction 3-phenylpyruvate + L-kynurenine = kynurenate + L-phenylalanine + H2O. The catalysed reaction is 4-methylsulfanyl-2-oxobutanoate + L-kynurenine = kynurenate + L-methionine + H2O. It carries out the reaction 2-oxo-3-sulfanylpropanoate + L-kynurenine = kynurenate + L-cysteine + H2O. The enzyme catalyses indole-3-pyruvate + L-kynurenine = kynurenate + L-tryptophan + H2O. It catalyses the reaction 2-oxopentanoate + L-kynurenine = L-2-aminopentanoate + kynurenate + H2O. The catalysed reaction is 4-methyl-2-oxopentanoate + L-kynurenine = kynurenate + L-leucine + H2O. It carries out the reaction L-2-aminoadipate + 2-oxoglutarate = 2-oxoadipate + L-glutamate. The enzyme catalyses glyoxylate + L-methionine = 4-methylsulfanyl-2-oxobutanoate + glycine. It catalyses the reaction L-2-aminoadipate + glyoxylate = 2-oxoadipate + glycine. The catalysed reaction is L-tyrosine + glyoxylate = 3-(4-hydroxyphenyl)pyruvate + glycine. It carries out the reaction glyoxylate + L-phenylalanine = 3-phenylpyruvate + glycine. The enzyme catalyses L-tryptophan + glyoxylate = indole-3-pyruvate + glycine. It catalyses the reaction L-leucine + glyoxylate = 4-methyl-2-oxopentanoate + glycine. The catalysed reaction is 2-oxobutanoate + L-kynurenine = (2S)-2-aminobutanoate + kynurenate + H2O. It carries out the reaction 2-oxoadipate + L-kynurenine = L-2-aminoadipate + kynurenate + H2O. The protein operates within amino-acid degradation; L-lysine degradation via saccharopine pathway; glutaryl-CoA from L-lysine: step 4/6. Its activity is regulated as follows. Kynurenine transaminase activity is competitively inhibited by aminoadipate, asparagine, glutamate, histidine, cysteine, lysine, 3-hydroxy-kynurenine and phenylalanine. Functionally, transaminase with broad substrate specificity. Has transaminase activity towards aminoadipate, kynurenine, methionine and glutamate. Shows activity also towards tryptophan, aspartate and hydroxykynurenine. Accepts a variety of oxo-acids as amino-group acceptors, with a preference for 2-oxoglutarate, 2-oxocaproic acid, phenylpyruvate and alpha-oxo-gamma-methiol butyric acid. Can also use glyoxylate as amino-group acceptor (in vitro). In Homo sapiens (Human), this protein is Kynurenine/alpha-aminoadipate aminotransferase, mitochondrial.